The primary structure comprises 296 residues: Ribose import binding protein RbsB (296 aa).

Residues 1–25 (MNMKKLATLVSAVALSATVSANAMA) form the signal peptide.

Belongs to the bacterial solute-binding protein 2 family. The complex is composed of an ATP-binding protein (RbsA), two transmembrane proteins (RbsC) and a solute-binding protein (RbsB).

It localises to the periplasm. In terms of biological role, part of the ABC transporter complex RbsABC involved in ribose import. Binds ribose. The chain is Ribose import binding protein RbsB (rbsB) from Salmonella typhi.